The chain runs to 155 residues: Ribosomal RNA large subunit methyltransferase H (155 aa).

S-adenosyl-L-methionine contacts are provided by residues Leu72, Gly103, and 122-127 (LSDLTL).

The protein belongs to the RNA methyltransferase RlmH family. As to quaternary structure, homodimer.

Its subcellular location is the cytoplasm. The enzyme catalyses pseudouridine(1915) in 23S rRNA + S-adenosyl-L-methionine = N(3)-methylpseudouridine(1915) in 23S rRNA + S-adenosyl-L-homocysteine + H(+). Specifically methylates the pseudouridine at position 1915 (m3Psi1915) in 23S rRNA. The chain is Ribosomal RNA large subunit methyltransferase H from Albidiferax ferrireducens (strain ATCC BAA-621 / DSM 15236 / T118) (Rhodoferax ferrireducens).